Consider the following 916-residue polypeptide: Protein translocase subunit SecA (916 aa).

Residues glutamine 87, 105–109 (GEGKT), and aspartate 512 each bind ATP. The disordered stretch occupies residues 857–916 (QHAEAPSMEQAVAGEEEELPEGPAPVVPLEPVRNEQKIGRNEPCPCGSGKKYKHCHGQLD). 4 residues coordinate Zn(2+): cysteine 900, cysteine 902, cysteine 911, and histidine 912. Basic residues predominate over residues 906–916 (KKYKHCHGQLD).

This sequence belongs to the SecA family. In terms of assembly, monomer and homodimer. Part of the essential Sec protein translocation apparatus which comprises SecA, SecYEG and auxiliary proteins SecDF-YajC and YidC. It depends on Zn(2+) as a cofactor.

It is found in the cell inner membrane. The protein resides in the cytoplasm. The enzyme catalyses ATP + H2O + cellular proteinSide 1 = ADP + phosphate + cellular proteinSide 2.. In terms of biological role, part of the Sec protein translocase complex. Interacts with the SecYEG preprotein conducting channel. Has a central role in coupling the hydrolysis of ATP to the transfer of proteins into and across the cell membrane, serving both as a receptor for the preprotein-SecB complex and as an ATP-driven molecular motor driving the stepwise translocation of polypeptide chains across the membrane. This chain is Protein translocase subunit SecA, found in Pseudomonas aeruginosa (strain LESB58).